We begin with the raw amino-acid sequence, 227 residues long: Gamma-glutamyl-hercynylcysteine sulfoxide hydrolase (227 aa).

Cys-2 (nucleophile) is an active-site residue. Positions 2-227 (CRHVAWLGAP…RDAHVVVTPL (226 aa)) constitute a Glutamine amidotransferase type-2 domain.

It carries out the reaction gamma-L-glutamyl-hercynylcysteine S-oxide + H2O = S-(hercyn-2-yl)-L-cysteine S-oxide + L-glutamate. It participates in amino-acid biosynthesis; ergothioneine biosynthesis. Functionally, catalyzes the hydrolysis of the gamma-glutamyl amide bond of hercynyl-gamma-L-glutamyl-L-cysteine sulfoxide to produce hercynylcysteine sulfoxide, a step in the biosynthesis pathway of ergothioneine. This chain is Gamma-glutamyl-hercynylcysteine sulfoxide hydrolase, found in Mycolicibacterium smegmatis (strain ATCC 700084 / mc(2)155) (Mycobacterium smegmatis).